We begin with the raw amino-acid sequence, 203 residues long: Ribosomal RNA large subunit methyltransferase E (203 aa).

Residues Gly51, Trp53, Asp69, Asp85, and Asp109 each contribute to the S-adenosyl-L-methionine site. Lys149 serves as the catalytic Proton acceptor.

It belongs to the class I-like SAM-binding methyltransferase superfamily. RNA methyltransferase RlmE family.

It localises to the cytoplasm. It catalyses the reaction uridine(2552) in 23S rRNA + S-adenosyl-L-methionine = 2'-O-methyluridine(2552) in 23S rRNA + S-adenosyl-L-homocysteine + H(+). Specifically methylates the uridine in position 2552 of 23S rRNA at the 2'-O position of the ribose in the fully assembled 50S ribosomal subunit. This chain is Ribosomal RNA large subunit methyltransferase E, found in Methanoculleus marisnigri (strain ATCC 35101 / DSM 1498 / JR1).